The chain runs to 262 residues: Putative BTB/POZ domain-containing protein L834 (262 aa).

The BTB domain maps to 16-86 (FDVVVELTDE…FYKKNIQPCI (71 aa)).

The protein belongs to the mimivirus BTB/WD family.

The protein is Putative BTB/POZ domain-containing protein L834 of Acanthamoeba polyphaga (Amoeba).